Here is a 92-residue protein sequence, read N- to C-terminus: MTDTTAPEAGAPAAAAGGARRPFFRRRKVCPFSGANAPKIDYKDVKLLQRYVSERGKIVPSRITAVSAKKQRELAKAIKRARFLALLPYVVK.

This sequence belongs to the bacterial ribosomal protein bS18 family. In terms of assembly, part of the 30S ribosomal subunit. Forms a tight heterodimer with protein bS6.

Binds as a heterodimer with protein bS6 to the central domain of the 16S rRNA, where it helps stabilize the platform of the 30S subunit. The sequence is that of Small ribosomal subunit protein bS18 from Caulobacter sp. (strain K31).